Reading from the N-terminus, the 266-residue chain is Flavin-dependent thymidylate synthase (266 aa).

In terms of domain architecture, ThyX spans 11-222 (GFIRLVDYMG…PLACASFERH (212 aa)). FAD contacts are provided by residues S57, 80 to 82 (RHR), and E88. DUMP is bound by residues 77 to 80 (QWIR), 88 to 92 (EISGR), and R161. A ThyX motif motif is present at residues 80–90 (RHRTARLNEIS). Residues 177–179 (DLH) and H183 contribute to the FAD site. R188 contacts dUMP. The active-site Involved in ionization of N3 of dUMP, leading to its activation is R188.

It belongs to the thymidylate synthase ThyX family. In terms of assembly, homotetramer. Requires FAD as cofactor.

It catalyses the reaction dUMP + (6R)-5,10-methylene-5,6,7,8-tetrahydrofolate + NADPH + H(+) = dTMP + (6S)-5,6,7,8-tetrahydrofolate + NADP(+). It functions in the pathway pyrimidine metabolism; dTTP biosynthesis. Functionally, catalyzes the reductive methylation of 2'-deoxyuridine-5'-monophosphate (dUMP) to 2'-deoxythymidine-5'-monophosphate (dTMP) while utilizing 5,10-methylenetetrahydrofolate (mTHF) as the methyl donor, and NADPH and FADH(2) as the reductant. The polypeptide is Flavin-dependent thymidylate synthase (Treponema denticola (strain ATCC 35405 / DSM 14222 / CIP 103919 / JCM 8153 / KCTC 15104)).